A 508-amino-acid polypeptide reads, in one-letter code: Methionine--tRNA ligase (508 aa).

The 'HIGH' region signature appears at 12 to 22 (YYVNDVAHIGH). Residues 295 to 299 (KISKS) carry the 'KMSKS' region motif. Lys-298 serves as a coordination point for ATP.

It belongs to the class-I aminoacyl-tRNA synthetase family. MetG type 2B subfamily. In terms of assembly, monomer.

The protein localises to the cytoplasm. The catalysed reaction is tRNA(Met) + L-methionine + ATP = L-methionyl-tRNA(Met) + AMP + diphosphate. Functionally, is required not only for elongation of protein synthesis but also for the initiation of all mRNA translation through initiator tRNA(fMet) aminoacylation. The sequence is that of Methionine--tRNA ligase (metG) from Rickettsia prowazekii (strain Madrid E).